The following is an 860-amino-acid chain: Leucine-rich repeat and death domain-containing protein 1 (860 aa).

The segment at 1–103 (MSEKEGMSEV…TGTSQSLSSL (103 aa)) is disordered. Residues 50–72 (KSSNQIYETHPRQNTLESTSSSG) are compositionally biased toward polar residues. Low complexity predominate over residues 90 to 103 (TSTRTGTSQSLSSL). 26 LRR repeats span residues 139–163 (LGAD…ILKI), 164–186 (KYVK…DSGD), 187–210 (LLGL…IQLL), 211–233 (HNLR…ISQL), 235–256 (NIRQ…LECL), 257–279 (GNLE…LPSL), 281–302 (TLRV…LCFL), 303–325 (PKLI…IREL), 326–348 (KNLE…IFQL), 350–371 (KIKE…IENF), 372–394 (RELR…ISCC), 396–417 (MLEC…IHKL), 419–440 (NLRK…ISHL), 441–463 (NNIC…IKNC), 465–486 (KIIK…LCAL), 487–510 (DSLY…SFSK), 512–532 (LLHL…FCSL), 533–555 (INLK…ISNM), 557–578 (SLHV…LCTL), 579–601 (ENLQ…ICNL), 603–624 (GIQK…LCQL), 627–650 (LEQL…LSNM), 651–673 (TQLK…IGEL), 675–696 (NLVS…LLSL), 697–719 (NDLQ…IYNI), and 721–742 (SLKE…ICKG). The region spanning 764 to 852 (EKIFKIVANN…EIMDKITALN (89 aa)) is the Death domain. An LRR 27 repeat occupies 856–860 (RAIKF).

This chain is Leucine-rich repeat and death domain-containing protein 1 (LRRD1), found in Homo sapiens (Human).